The following is a 341-amino-acid chain: Phosphate acyltransferase (341 aa).

It belongs to the PlsX family. As to quaternary structure, homodimer. Probably interacts with PlsY.

It localises to the cytoplasm. The catalysed reaction is a fatty acyl-[ACP] + phosphate = an acyl phosphate + holo-[ACP]. It participates in lipid metabolism; phospholipid metabolism. In terms of biological role, catalyzes the reversible formation of acyl-phosphate (acyl-PO(4)) from acyl-[acyl-carrier-protein] (acyl-ACP). This enzyme utilizes acyl-ACP as fatty acyl donor, but not acyl-CoA. The chain is Phosphate acyltransferase from Vibrio vulnificus (strain CMCP6).